The primary structure comprises 71 residues: Long neurotoxin 1 (71 aa).

5 disulfides stabilise this stretch: Cys3/Cys20, Cys14/Cys41, Cys26/Cys30, Cys45/Cys56, and Cys57/Cys62.

This sequence belongs to the three-finger toxin family. Long-chain subfamily. Type II alpha-neurotoxin sub-subfamily. As to expression, expressed by the venom gland.

Its subcellular location is the secreted. Its function is as follows. Binds with high affinity to muscular (alpha-1/CHRNA1) and neuronal (alpha-7/CHRNA7) nicotinic acetylcholine receptor (nAChR) and inhibits acetylcholine from binding to the receptor, thereby impairing neuromuscular and neuronal transmission. This chain is Long neurotoxin 1, found in Naja haje haje (Egyptian cobra).